The following is a 233-amino-acid chain: Ion-translocating oxidoreductase complex subunit E (233 aa).

A run of 6 helical transmembrane segments spans residues 18 to 38 (ALVQLLGLCPLLAVSSTATNA), 39 to 59 (LGLGLATTLVLVCTNTAVSAL), 69 to 89 (IPIYVMIIASVVSTVQMLINA), 92 to 112 (FGLYQSLGIFIPLIVTNCIVI), 128 to 148 (ALDGFAMGMGATCALFVLGAL), and 182 to 202 (PFLLAMLPPGAFIGLGLLLAG).

It belongs to the NqrDE/RnfAE family. The complex is composed of six subunits: RnfA, RnfB, RnfC, RnfD, RnfE and RnfG.

The protein localises to the cell inner membrane. In terms of biological role, part of a membrane-bound complex that couples electron transfer with translocation of ions across the membrane. This chain is Ion-translocating oxidoreductase complex subunit E, found in Yersinia pseudotuberculosis serotype IB (strain PB1/+).